Reading from the N-terminus, the 620-residue chain is Proline--tRNA ligase (620 aa).

Belongs to the class-II aminoacyl-tRNA synthetase family. ProS type 1 subfamily. As to quaternary structure, homodimer.

The protein localises to the cytoplasm. It carries out the reaction tRNA(Pro) + L-proline + ATP = L-prolyl-tRNA(Pro) + AMP + diphosphate. Functionally, catalyzes the attachment of proline to tRNA(Pro) in a two-step reaction: proline is first activated by ATP to form Pro-AMP and then transferred to the acceptor end of tRNA(Pro). As ProRS can inadvertently accommodate and process non-cognate amino acids such as alanine and cysteine, to avoid such errors it has two additional distinct editing activities against alanine. One activity is designated as 'pretransfer' editing and involves the tRNA(Pro)-independent hydrolysis of activated Ala-AMP. The other activity is designated 'posttransfer' editing and involves deacylation of mischarged Ala-tRNA(Pro). The misacylated Cys-tRNA(Pro) is not edited by ProRS. The sequence is that of Proline--tRNA ligase from Streptococcus suis (strain 98HAH33).